We begin with the raw amino-acid sequence, 135 residues long: Large ribosomal subunit protein eL32 (135 aa).

This sequence belongs to the eukaryotic ribosomal protein eL32 family.

The protein is Large ribosomal subunit protein eL32 of Methanococcus maripaludis (strain C5 / ATCC BAA-1333).